Here is a 227-residue protein sequence, read N- to C-terminus: Probable chorismate pyruvate-lyase (227 aa).

Substrate is bound by residues R75, L113, and E173. The tract at residues 192-227 is disordered; that stretch reads SGDWSAHPRVREHGRPLEHTASRAHPATRASDEQRR. A compositionally biased stretch (basic and acidic residues) spans 200-212; it reads RVREHGRPLEHTA.

Belongs to the UbiC family.

Its subcellular location is the cytoplasm. The catalysed reaction is chorismate = 4-hydroxybenzoate + pyruvate. The protein operates within cofactor biosynthesis; ubiquinone biosynthesis. Functionally, removes the pyruvyl group from chorismate, with concomitant aromatization of the ring, to provide 4-hydroxybenzoate (4HB) for the ubiquinone pathway. This chain is Probable chorismate pyruvate-lyase, found in Paraburkholderia xenovorans (strain LB400).